We begin with the raw amino-acid sequence, 194 residues long: Adenylate kinase (194 aa).

Glycine 10–threonine 15 contributes to the ATP binding site. Positions serine 30–valine 59 are NMP. AMP contacts are provided by residues threonine 31, arginine 36, glutamine 57 to valine 59, glycine 85 to arginine 88, and glutamine 92. Residues serine 126–aspartate 142 are LID. Arginine 127 contacts ATP. AMP is bound by residues arginine 139 and arginine 150. Residue alanine 178 coordinates ATP.

Belongs to the adenylate kinase family. In terms of assembly, monomer.

The protein localises to the cytoplasm. The enzyme catalyses AMP + ATP = 2 ADP. It functions in the pathway purine metabolism; AMP biosynthesis via salvage pathway; AMP from ADP: step 1/1. Catalyzes the reversible transfer of the terminal phosphate group between ATP and AMP. Plays an important role in cellular energy homeostasis and in adenine nucleotide metabolism. This chain is Adenylate kinase, found in Brucella anthropi (strain ATCC 49188 / DSM 6882 / CCUG 24695 / JCM 21032 / LMG 3331 / NBRC 15819 / NCTC 12168 / Alc 37) (Ochrobactrum anthropi).